The sequence spans 100 residues: MAKKSLIYREKKRQKLEQKYHLIRRSSKKEISLIPSLSEKWKIHGKLQSPPRNSAPTRLHRRCFSTGRPRANYRDFGLSGHILREMVQACLLPGATRSSW.

Belongs to the universal ribosomal protein uS14 family. As to quaternary structure, part of the 30S ribosomal subunit.

It is found in the plastid. Its subcellular location is the chloroplast. Functionally, binds 16S rRNA, required for the assembly of 30S particles. The chain is Small ribosomal subunit protein uS14c from Draba nemorosa (Woodland whitlowgrass).